The primary structure comprises 343 residues: Heat-inducible transcription repressor HrcA (343 aa).

Belongs to the HrcA family.

Its function is as follows. Negative regulator of class I heat shock genes (grpE-dnaK-dnaJ and groELS operons). Prevents heat-shock induction of these operons. This is Heat-inducible transcription repressor HrcA from Bacillus subtilis (strain 168).